A 525-amino-acid polypeptide reads, in one-letter code: Ankyrin repeat domain-containing protein SOWAHC (525 aa).

A disordered region spans residues 84–263 (CEGPSEPSGD…EESSGGGSVT (180 aa)). The residue at position 88 (Ser-88) is a Phosphoserine. Positions 101 to 112 (AEPEAPDGPAGP) are enriched in low complexity. Ser-126, Ser-213, and Ser-226 each carry phosphoserine. A compositionally biased stretch (gly residues) spans 230–241 (SSGGGRGRGGGD). Residues 242–251 (SDSASVASSS) show a composition bias toward low complexity. ANK repeat units lie at residues 301–330 (TGFTCLHWAAKHGRQELLAMLVNFANKHQL) and 340–370 (GGYTALHLAAMHGHVEVVKLLVGAYDADVDI). The disordered stretch occupies residues 434–525 (DGGDHHHHHH…TLRPKSNVFG (92 aa)). Positions 468-477 (IKPRLNKIRF) are enriched in basic residues. Basic and acidic residues predominate over residues 489 to 509 (RDPEQPLEGRGEEGVGEERPV).

The protein belongs to the SOWAH family.

This is Ankyrin repeat domain-containing protein SOWAHC (SOWAHC) from Homo sapiens (Human).